The chain runs to 48 residues: Large ribosomal subunit protein bL34c (48 aa).

Positions 18–48 are disordered; that stretch reads SGFRSRMATPQGRKTIRNRRKKGRKNLTLRR. Residues 31-48 are compositionally biased toward basic residues; that stretch reads KTIRNRRKKGRKNLTLRR.

It belongs to the bacterial ribosomal protein bL34 family.

It is found in the plastid. The protein localises to the chloroplast. The sequence is that of Large ribosomal subunit protein bL34c from Phaeodactylum tricornutum (strain CCAP 1055/1).